The sequence spans 329 residues: Minor capsid protein A1 (329 aa).

The segment at 143–162 (GPSPVPGPNPDPPLEPPPGT) is disordered. A compositionally biased stretch (pro residues) spans 145 to 161 (SPVPGPNPDPPLEPPPG).

Its subcellular location is the virion. Minor capsid protein. The protein is Minor capsid protein A1 of Qbeta virus (strain MX1).